A 286-amino-acid polypeptide reads, in one-letter code: Inositol polyphosphate multikinase alpha (286 aa).

The disordered stretch occupies residues 1 to 22 (MQLKVPEHQVAGHIAKDGKPGP).

The protein belongs to the inositol phosphokinase (IPK) family. In terms of processing, phosphorylated. Detected in leaves, stems, roots, siliques and flowers. Highly expressed in root tissues, anthers, the stigma, pollen grains and growing pollen tubes.

The protein resides in the nucleus. The protein localises to the cell membrane. The catalysed reaction is 1D-myo-inositol 1,4,5-trisphosphate + 2 ATP = 1D-myo-inositol 1,3,4,5,6-pentakisphosphate + 2 ADP + 2 H(+). It carries out the reaction 1D-myo-inositol 1,3,4,6-tetrakisphosphate + ATP = 1D-myo-inositol 1,3,4,5,6-pentakisphosphate + ADP + H(+). Functionally, inositol phosphate kinase with a broad substrate specificity. Phosphorylates inositol 1,4,5-trisphosphate (Ins(1,4,5)P3), inositol 1,4,5,6-tetrakisphosphate (Ins(1,4,5,6)P4), inositol 1,3,4,5-tetrakisphosphate (Ins(1,3,4,5)P4), inositol 1,3,4,6-tetrakisphosphate (Ins(1,3,4,6)P4) and inositol 1,2,3,4,6-pentakisphosphate (Ins(1,2,3,4,6)P5) but not inositol 1,4-bisphosphate (Ins(1,4)P2), inositol 1,3,4-trisphosphate (Ins(1,3,4)P3), inositol 1,2,6-trisphosphate (Ins(1,2,6)P3), inositol 3,4,5,6-tetrakisphosphate (Ins(3,4,5,6)P4), inositol 1,3,4,5,6-pentakisphosphate (Ins(1,3,4,5,6)P5), inositol 1,2,4,5,6-pentakisphosphate (Ins(1,2,4,5,6)P5) or inositol hexakisphosphate (InsP6). Regulates pollen and root development probably through the regulation of InsP3-mediated calcium accumulation. The sequence is that of Inositol polyphosphate multikinase alpha (IPK2a) from Arabidopsis thaliana (Mouse-ear cress).